The following is a 264-amino-acid chain: Undecaprenyl-diphosphatase (264 aa).

Transmembrane regions (helical) follow at residues 38-58 (RSDFFNIVIQAGAIVAVVLVF), 75-95 (REYVFKLGAAFLVTAVVGLVV), 106-126 (VSPVAWALIIGGIWMLLVEAY), 136-156 (VTWTVAIGVGLAQVVAGVFPG), 181-201 (FVFLVGIPTMFAASAYTFLEM), 217-237 (VAFLAAAVTGFVVVKWLMGYI), and 242-262 (FTAFALYRIALGAALLLWLPS).

This sequence belongs to the UppP family.

It localises to the cell inner membrane. It carries out the reaction di-trans,octa-cis-undecaprenyl diphosphate + H2O = di-trans,octa-cis-undecaprenyl phosphate + phosphate + H(+). Functionally, catalyzes the dephosphorylation of undecaprenyl diphosphate (UPP). Confers resistance to bacitracin. This chain is Undecaprenyl-diphosphatase, found in Stenotrophomonas maltophilia (strain R551-3).